The chain runs to 122 residues: Beta-2-microglobulin (122 aa).

Positions 1–23 (MFLRSTFVAALVACLAYIHLGDA) are cleaved as a signal peptide. Residues 28–117 (PKVQIYSRNV…STLREATRFT (90 aa)) enclose the Ig-like C1-type domain. An intrachain disulfide couples cysteine 48 to cysteine 103.

The protein belongs to the beta-2-microglobulin family. As to quaternary structure, heterodimer of an alpha chain and a beta chain. Beta-2-microglobulin is the beta-chain of major histocompatibility complex class I molecules.

It is found in the secreted. Functionally, component of the class I major histocompatibility complex (MHC). Involved in the presentation of peptide antigens to the immune system. This chain is Beta-2-microglobulin (b2m), found in Acipenser baerii (Siberian sturgeon).